Consider the following 185-residue polypeptide: Translocon-associated protein subunit gamma (185 aa).

At M1 the chain carries N-acetylmethionine. At 1-27 (MAPKGGSKQQSEEDLLLQDFSRNLSAK) the chain is on the lumenal side. Phosphoserine is present on residues S7 and S11. A helical transmembrane segment spans residues 28–48 (SSALFFGNAFIVSAIPIWLYW). Over 49-54 (RIWHMD) the chain is Cytoplasmic. The chain crosses the membrane as a helical span at residues 55–76 (LIQSAVLYSVMTLVSTYLVAFA). The Lumenal segment spans residues 77 to 135 (YKNVKFVLKHKVAQKREDAVSKEVTRKLSEADNRKMSRKEKDERILWKKNEVADYEATT). S105 carries the phosphoserine modification. The chain crosses the membrane as a helical span at residues 136–157 (FSIFYNNTLFLVLVIVASFFIL). Topologically, residues 158-163 (KNFNPT) are cytoplasmic. A helical membrane pass occupies residues 164 to 184 (VNYILSISASSGLIALLSTGS).

The protein belongs to the TRAP-gamma family. In terms of assembly, heterotetramer of TRAP-alpha, TRAP-beta, TRAP-delta and TRAP-gamma.

The protein localises to the endoplasmic reticulum membrane. In terms of biological role, TRAP proteins are part of a complex whose function is to bind calcium to the ER membrane and thereby regulate the retention of ER resident proteins. This is Translocon-associated protein subunit gamma (Ssr3) from Mus musculus (Mouse).